A 145-amino-acid polypeptide reads, in one-letter code: D-aminoacyl-tRNA deacylase (145 aa).

The short motif at 137–138 is the Gly-cisPro motif, important for rejection of L-amino acids element; sequence GP.

Belongs to the DTD family. Homodimer.

The protein localises to the cytoplasm. The enzyme catalyses glycyl-tRNA(Ala) + H2O = tRNA(Ala) + glycine + H(+). The catalysed reaction is a D-aminoacyl-tRNA + H2O = a tRNA + a D-alpha-amino acid + H(+). Functionally, an aminoacyl-tRNA editing enzyme that deacylates mischarged D-aminoacyl-tRNAs. Also deacylates mischarged glycyl-tRNA(Ala), protecting cells against glycine mischarging by AlaRS. Acts via tRNA-based rather than protein-based catalysis; rejects L-amino acids rather than detecting D-amino acids in the active site. By recycling D-aminoacyl-tRNA to D-amino acids and free tRNA molecules, this enzyme counteracts the toxicity associated with the formation of D-aminoacyl-tRNA entities in vivo and helps enforce protein L-homochirality. This chain is D-aminoacyl-tRNA deacylase, found in Salmonella arizonae (strain ATCC BAA-731 / CDC346-86 / RSK2980).